The sequence spans 721 residues: Polyribonucleotide nucleotidyltransferase (721 aa).

Mg(2+) contacts are provided by Asp-490 and Asp-496. The KH domain maps to 557–623; the sequence is PRIISIKINP…RIAGLTKEAK (67 aa). Residues 625-693 enclose the S1 motif domain; sequence GEEYEGTVVK…DRGKIDLIRP (69 aa). The segment at 693–721 is disordered; the sequence is PELEGKIAPREPRAPRGGGDRGPRPPRRD.

It belongs to the polyribonucleotide nucleotidyltransferase family. Requires Mg(2+) as cofactor.

Its subcellular location is the cytoplasm. It catalyses the reaction RNA(n+1) + phosphate = RNA(n) + a ribonucleoside 5'-diphosphate. Functionally, involved in mRNA degradation. Catalyzes the phosphorolysis of single-stranded polyribonucleotides processively in the 3'- to 5'-direction. This is Polyribonucleotide nucleotidyltransferase from Deinococcus deserti (strain DSM 17065 / CIP 109153 / LMG 22923 / VCD115).